The sequence spans 609 residues: Mitochondrial nucleoid-associated protein 1 (609 aa).

Topologically, residues 1–554 (MSDNPPRMEV…CNTTIRKSGF (554 aa)) are extracellular. Disordered regions lie at residues 133–163 (QEET…GESR) and 406–425 (SPEG…QASH). Residues 146 to 161 (TSPKRELAEDLPKSGE) are compositionally biased toward basic and acidic residues. The chain crosses the membrane as a helical span at residues 555–571 (GGITMLSTGYFVLCCSW). Residues 572 to 609 (SFRRLKKLCRPLPWKSTVPPSVGVAKTTGDCRSKTCLD) are Cytoplasmic-facing.

The protein resides in the mitochondrion inner membrane. The protein localises to the mitochondrion matrix. It localises to the mitochondrion nucleoid. Critical regulator of mitochondrial DNA (mtDNA) abundance. Binds dsDNA throughout the mitochondrial genome without sequence specificity and controls mtDNA copy number by promoting its replication. Also plays important roles in mitochondrial metabolism and cell proliferation. The protein is Mitochondrial nucleoid-associated protein 1 of Pongo abelii (Sumatran orangutan).